Here is a 188-residue protein sequence, read N- to C-terminus: Ribosome-recycling factor (188 aa).

It belongs to the RRF family.

It localises to the cytoplasm. In terms of biological role, responsible for the release of ribosomes from messenger RNA at the termination of protein biosynthesis. May increase the efficiency of translation by recycling ribosomes from one round of translation to another. In Dinoroseobacter shibae (strain DSM 16493 / NCIMB 14021 / DFL 12), this protein is Ribosome-recycling factor.